Reading from the N-terminus, the 720-residue chain is Nucleoporin 88 (720 aa).

The stretch at 584–611 forms a coiled coil; that stretch reads LALCREDRKSLTEAAERLADKYEDAKYR.

As to expression, widely expressed. Higher levels of expression are detected in highly proliferative frontal regions of the embryo, e.g. brain, eye and anterior trunk.

The protein localises to the nucleus. It is found in the nuclear pore complex. Functionally, component of the nuclear pore complex. The protein is Nucleoporin 88 of Danio rerio (Zebrafish).